The chain runs to 860 residues: Probable linoleate 9S-lipoxygenase 4 (860 aa).

Residues 29–159 (NALDFTDLAG…RYKSDRIFFA (131 aa)) form the PLAT domain. The region spanning 162–860 (PYLPSETPEL…GKGIPNSVSI (699 aa)) is the Lipoxygenase domain. A disordered region spans residues 209-246 (PDQGKENVRTTLGGSADYPYPRRGRTGRPPTRTDPKSE). Fe cation is bound by residues His521, His526, His712, Asn716, and Ile860.

Belongs to the lipoxygenase family. In terms of assembly, monomer. The cofactor is Fe cation. Expressed in tubers and roots. Not detected in leaves, flowers, stems, shoot tips, or axillary buds.

It localises to the cytoplasm. It catalyses the reaction (9Z,12Z)-octadecadienoate + O2 = (9S)-hydroperoxy-(10E,12Z)-octadecadienoate. It participates in lipid metabolism; oxylipin biosynthesis. Plant lipoxygenases may be involved in a number of diverse aspects of plant physiology including growth and development, pest resistance, and senescence or responses to wounding. Catalyzes the hydroperoxidation of lipids containing a cis,cis-1,4-pentadiene structure. The sequence is that of Probable linoleate 9S-lipoxygenase 4 (LOX1.4) from Solanum tuberosum (Potato).